A 320-amino-acid polypeptide reads, in one-letter code: Tyrosine recombinase XerC (320 aa).

One can recognise a Core-binding (CB) domain in the interval 14 to 104 (ADVREAVASW…SLRSFARHLE (91 aa)). Residues 125–311 (RLPRPLPVAA…DSARLMSAFE (187 aa)) form the Tyr recombinase domain. Catalysis depends on residues Arg170, Lys195, His263, Arg266, and His289. Tyr298 (O-(3'-phospho-DNA)-tyrosine intermediate) is an active-site residue.

Belongs to the 'phage' integrase family. XerC subfamily. In terms of assembly, forms a cyclic heterotetrameric complex composed of two molecules of XerC and two molecules of XerD.

The protein localises to the cytoplasm. Its function is as follows. Site-specific tyrosine recombinase, which acts by catalyzing the cutting and rejoining of the recombining DNA molecules. The XerC-XerD complex is essential to convert dimers of the bacterial chromosome into monomers to permit their segregation at cell division. It also contributes to the segregational stability of plasmids. The sequence is that of Tyrosine recombinase XerC from Methylobacterium sp. (strain 4-46).